A 218-amino-acid polypeptide reads, in one-letter code: Protein-L-isoaspartate O-methyltransferase (218 aa).

The active site involves serine 60.

The protein belongs to the methyltransferase superfamily. L-isoaspartyl/D-aspartyl protein methyltransferase family.

The protein resides in the cytoplasm. It catalyses the reaction [protein]-L-isoaspartate + S-adenosyl-L-methionine = [protein]-L-isoaspartate alpha-methyl ester + S-adenosyl-L-homocysteine. In terms of biological role, catalyzes the methyl esterification of L-isoaspartyl residues in peptides and proteins that result from spontaneous decomposition of normal L-aspartyl and L-asparaginyl residues. It plays a role in the repair and/or degradation of damaged proteins. In Roseiflexus castenholzii (strain DSM 13941 / HLO8), this protein is Protein-L-isoaspartate O-methyltransferase.